A 149-amino-acid chain; its full sequence is Large ribosomal subunit protein uL13 (149 aa).

This sequence belongs to the universal ribosomal protein uL13 family. In terms of assembly, part of the 50S ribosomal subunit.

This protein is one of the early assembly proteins of the 50S ribosomal subunit, although it is not seen to bind rRNA by itself. It is important during the early stages of 50S assembly. This Chlamydia pneumoniae (Chlamydophila pneumoniae) protein is Large ribosomal subunit protein uL13.